We begin with the raw amino-acid sequence, 157 residues long: Small ribosomal subunit protein uS7 (157 aa).

The protein belongs to the universal ribosomal protein uS7 family. As to quaternary structure, part of the 30S ribosomal subunit. Contacts proteins S9 and S11.

One of the primary rRNA binding proteins, it binds directly to 16S rRNA where it nucleates assembly of the head domain of the 30S subunit. Is located at the subunit interface close to the decoding center, probably blocks exit of the E-site tRNA. This is Small ribosomal subunit protein uS7 from Phenylobacterium zucineum (strain HLK1).